Consider the following 678-residue polypeptide: Protein hook (678 aa).

Residues 1–155 are interaction with microtubules; it reads MSTQNGMYYS…NIMRALQELE (155 aa). A Calponin-homology (CH) domain is found at 5-123; that stretch reads NGMYYSLLEW…RLLQLVLGCA (119 aa). 2 coiled-coil regions span residues 135 to 435 and 479 to 589; these read EIMC…LKCG and QTAL…AKEV.

This sequence belongs to the hook family. Homodimer. Interacts with microtubules via its N-terminus.

It is found in the cytoplasm. It localises to the cytoskeleton. The protein resides in the endosome. The protein localises to the synapse. In terms of biological role, involved in endocytic trafficking by stabilizing organelles of the endocytic pathway. Probably acts as a cytoskeletal linker protein required to tether endosome vesicles to the cytoskeleton. Involved in modulation of endocytosis at stages required for down-regulation of membrane proteins that control synapse size. Not involved in synaptic vesicle recycling. Required in R7 cells for boss endocytosis into multivesicular bodies (MVBs). Has a role in regulating adult longevity. In Drosophila virilis (Fruit fly), this protein is Protein hook.